The chain runs to 360 residues: Heme A synthase (360 aa).

The next 8 helical transmembrane spans lie at 29–49, 111–131, 139–159, 175–195, 210–230, 269–289, 309–329, and 330–350; these read WLFL…ATRL, FLGR…WWTG, LGLV…WIMV, LAAH…LAAG, LTAL…GLVA, VALV…LALL, ALAG…LLAV, and PLWA…MAVA. His-276 serves as a coordination point for heme. His-337 contributes to the heme binding site.

The protein belongs to the COX15/CtaA family. Type 2 subfamily. In terms of assembly, interacts with CtaB. Heme b is required as a cofactor.

The protein localises to the cell membrane. It carries out the reaction Fe(II)-heme o + 2 A + H2O = Fe(II)-heme a + 2 AH2. It functions in the pathway porphyrin-containing compound metabolism; heme A biosynthesis; heme A from heme O: step 1/1. In terms of biological role, catalyzes the conversion of heme O to heme A by two successive hydroxylations of the methyl group at C8. The first hydroxylation forms heme I, the second hydroxylation results in an unstable dihydroxymethyl group, which spontaneously dehydrates, resulting in the formyl group of heme A. In Methylobacterium sp. (strain 4-46), this protein is Heme A synthase.